The primary structure comprises 83 residues: Acid shock protein (83 aa).

Residues 1-21 form the signal peptide; the sequence is MKKVLALVVAAAMGLSSAAFA. Positions 22-40 are enriched in low complexity; it reads AETATPAKTATPAKTTQNT. Residues 22–56 constitute a propeptide that is removed on maturation; that stretch reads AETATPAKTATPAKTTQNTQHHKKQHKKTVEQKAQ. Positions 22–83 are disordered; the sequence is AETATPAKTA…TSKTTSQPAA (62 aa). Residues 57-70 are compositionally biased toward basic residues; it reads AAKKHQKKDGKKAP. Positions 71 to 83 are enriched in low complexity; it reads AKSTSKTTSQPAA.

The protein belongs to the Asr family. Post-translationally, proteolytic processing gives rise to the active protein.

It is found in the periplasm. Functionally, required for growth and/or survival at acidic conditions. The sequence is that of Acid shock protein from Salmonella heidelberg (strain SL476).